A 350-amino-acid chain; its full sequence is GTPase Obg (350 aa).

The Obg domain maps to 1 to 175 (MFVDNIRIFA…GVFFMELRRI (175 aa)). Residues 176 to 345 (ADAGLVGYPN…LRNRLDELVG (170 aa)) enclose the OBG-type G domain. Residues 182–189 (GYPNAGKS), 207–211 (FTTLQ), 229–232 (DIPG), 299–302 (NKMD), and 326–328 (SAL) each bind GTP. Residues Ser-189 and Thr-209 each contribute to the Mg(2+) site.

It belongs to the TRAFAC class OBG-HflX-like GTPase superfamily. OBG GTPase family. Monomer. Requires Mg(2+) as cofactor.

Its subcellular location is the cytoplasm. In terms of biological role, an essential GTPase which binds GTP, GDP and possibly (p)ppGpp with moderate affinity, with high nucleotide exchange rates and a fairly low GTP hydrolysis rate. Plays a role in control of the cell cycle, stress response, ribosome biogenesis and in those bacteria that undergo differentiation, in morphogenesis control. The polypeptide is GTPase Obg (Akkermansia muciniphila (strain ATCC BAA-835 / DSM 22959 / JCM 33894 / BCRC 81048 / CCUG 64013 / CIP 107961 / Muc)).